A 486-amino-acid chain; its full sequence is Alliin lyase 1 (486 aa).

A signal peptide spans 1 to 28 (MVESYKKIGSCNKMPCLVILTCIIMSNS). The propeptide occupies 29 to 38 (LVNNNNMVQA). Residues 51–97 (EAVANINCSEHGRAFLDGIISEGSPKCECNTCYTGPDCSEKIQGCSA) form the EGF-like; atypical domain. The N-linked (GlcNAc...) asparagine glycan is linked to N57. 3 cysteine pairs are disulfide-bonded: C58–C77, C79–C88, and C82–C95. 130–138 (YFFNPVSNF) is a chloride binding site. N-linked (GlcNAc...) asparagine glycans are attached at residues N184 and N229. N6-(pyridoxal phosphate)lysine is present on K289. N-linked (GlcNAc...) asparagine glycosylation occurs at N366. C406 and C414 form a disulfide bridge.

The protein belongs to the alliinase family. As to quaternary structure, homodimer. It depends on pyridoxal 5'-phosphate as a cofactor. Expressed in bulb (at protein level). Expressed in shoots.

It is found in the vacuole. The catalysed reaction is an S-alkyl-L-cysteine S-oxide = an S-alkyl sulfenate + 2-aminoprop-2-enoate. Able to cleave the C-S bond of sulfoxide derivatives of Cys to produce allicin, thus giving rise to all sulfur compounds which are responsible for most of the properties of garlic, such as the specific smell and flavor as well as the health benefits like blood lipid or blood pressure lowering. The polypeptide is Alliin lyase 1 (Allium sativum (Garlic)).